We begin with the raw amino-acid sequence, 212 residues long: Pyridoxine/pyridoxamine 5'-phosphate oxidase (212 aa).

Residues 59-64 (RMVLMK), 74-75 (YS), Lys-81, and Gln-103 contribute to the FMN site. A substrate-binding site is contributed by Lys-64. Tyr-121 and Arg-125 together coordinate substrate. Residues 138 to 139 (QS) and Trp-183 contribute to the FMN site. 189–191 (RLH) lines the substrate pocket. Arg-193 serves as a coordination point for FMN.

Belongs to the pyridoxamine 5'-phosphate oxidase family. In terms of assembly, homodimer. FMN is required as a cofactor.

The catalysed reaction is pyridoxamine 5'-phosphate + O2 + H2O = pyridoxal 5'-phosphate + H2O2 + NH4(+). It carries out the reaction pyridoxine 5'-phosphate + O2 = pyridoxal 5'-phosphate + H2O2. The protein operates within cofactor metabolism; pyridoxal 5'-phosphate salvage; pyridoxal 5'-phosphate from pyridoxamine 5'-phosphate: step 1/1. It participates in cofactor metabolism; pyridoxal 5'-phosphate salvage; pyridoxal 5'-phosphate from pyridoxine 5'-phosphate: step 1/1. Its function is as follows. Catalyzes the oxidation of either pyridoxine 5'-phosphate (PNP) or pyridoxamine 5'-phosphate (PMP) into pyridoxal 5'-phosphate (PLP). The protein is Pyridoxine/pyridoxamine 5'-phosphate oxidase of Rhodopseudomonas palustris (strain HaA2).